The chain runs to 179 residues: Large ribosomal subunit protein uL5 (179 aa).

Belongs to the universal ribosomal protein uL5 family. In terms of assembly, part of the 50S ribosomal subunit; part of the 5S rRNA/L5/L18/L25 subcomplex. Contacts the 5S rRNA and the P site tRNA. Forms a bridge to the 30S subunit in the 70S ribosome.

Functionally, this is one of the proteins that bind and probably mediate the attachment of the 5S RNA into the large ribosomal subunit, where it forms part of the central protuberance. In the 70S ribosome it contacts protein S13 of the 30S subunit (bridge B1b), connecting the 2 subunits; this bridge is implicated in subunit movement. Contacts the P site tRNA; the 5S rRNA and some of its associated proteins might help stabilize positioning of ribosome-bound tRNAs. The protein is Large ribosomal subunit protein uL5 of Francisella tularensis subsp. novicida (strain U112).